A 173-amino-acid polypeptide reads, in one-letter code: MILTGKEIQKRIGNDIVITPYSEKQLNPNSYNLRLHEELLVYTELPLDMKKPNPAEKLVIPESGLLLKPGILYLGRTLESTETHNLVPMLEGRSSIGRLGMLVHVTAGFGDVGFKGFWTLEISVIQPLIVYPGVEVCQIFYHTLEGQITEYTSGKYQANRGIQTSMLYKDFEK.

Residues 93–98 (RSSIGR), D111, 119–121 (TLE), and Q138 contribute to the dCTP site. E121 (proton donor/acceptor) is an active-site residue.

The protein belongs to the dCTP deaminase family. Homotrimer.

It catalyses the reaction dCTP + 2 H2O = dUMP + NH4(+) + diphosphate. Its pathway is pyrimidine metabolism; dUMP biosynthesis; dUMP from dCTP: step 1/1. In terms of biological role, bifunctional enzyme that catalyzes both the deamination of dCTP to dUTP and the hydrolysis of dUTP to dUMP without releasing the toxic dUTP intermediate. The polypeptide is dCTP deaminase, dUMP-forming (Leptospira interrogans serogroup Icterohaemorrhagiae serovar copenhageni (strain Fiocruz L1-130)).